The primary structure comprises 101 residues: Apolipoprotein C-II (101 aa).

Residues 1–26 form the signal peptide; the sequence is MGTRYFLALFLILLVLGFKVQGVAMA. The lipid binding stretch occupies residues 66–74; the sequence is TMDEKIRDI. Positions 78 to 101 are lipoprotein lipase cofactor; sequence STAAVTTYAGIFTDQLLSLLKGDQ.

This sequence belongs to the apolipoprotein C2 family. In terms of processing, proapolipoprotein C-II is synthesized as a sialic acid containing glycoprotein which is subsequently desialylated prior to its proteolytic processing. Proapolipoprotein C-II undergoes proteolytic cleavage of its N-terminal hexapeptide to generate apolipoprotein C-II. In bovine, proapolipoprotein C-II was found to be the minor form whereas apolipoprotein C-II was found to be the major form in plasma.

Its subcellular location is the secreted. Its function is as follows. Component of chylomicrons, very low-density lipoproteins (VLDL), low-density lipoproteins (LDL), and high-density lipoproteins (HDL) in plasma. Plays an important role in lipoprotein metabolism as an activator of lipoprotein lipase. Both proapolipoprotein C-II and apolipoprotein C-II can activate lipoprotein lipase. In Camelus dromedarius (Dromedary), this protein is Apolipoprotein C-II (APOC2).